The following is a 607-amino-acid chain: MASELIEQKLALLPSQPGSYQMKDKNGKIIYVGKAKNLKNRVRSYFKAEHTGKTAELVANIHDFEFIVTNSDKEAFLLENTLIKRYRPYFNIRLKFSGSYPYIEITNERDPRLILANTLKHDHGTYFGPYPNVYAASETLHFLEMTYPLRRCNGYQGRPCLYYSMGQCLGACWRTVPQEEYQKNIDAITRFLNGETGKAISDIKKKMKRASDSTEYELAADFRDRLKFIDQTVESQRVLQNDHTPRDLFNFYMDKGWMTIEIFFLRQGRLLRQQKETLALADSVKEELESYIQQFYSQKNAQKPKEVLVPKNVDTKLLAETLEIPVRTPVRGEKRDLLKLAAKNARITLEDKFRLMELNEEKTTGAMKEITDALKIPHGYRFEAFDHSNTQGSNYVSALVVFEDGLPNKNLYRRYKLRTPTGQDEAKATFEVITRRYTRLRDEGQMYPDLILMDGGEIQLHSAEAALRKLDIDIPVAAMVKNDKHQTADLLNSRGENLFLDPHSQGFYLLQRIQDEVHRFVITFHRQLRTKTNLSSRLDEIAGIGPKSRVKLMRRFGSLPKIADASIEDIEALGIGEKVATLVKVSVSAMVKSENKKIIAKRKFEKE.

The region spanning 15–92 (SQPGSYQMKD…IKRYRPYFNI (78 aa)) is the GIY-YIG domain. The UVR domain occupies 197–232 (GKAISDIKKKMKRASDSTEYELAADFRDRLKFIDQT).

It belongs to the UvrC family. As to quaternary structure, interacts with UvrB in an incision complex.

Its subcellular location is the cytoplasm. The UvrABC repair system catalyzes the recognition and processing of DNA lesions. UvrC both incises the 5' and 3' sides of the lesion. The N-terminal half is responsible for the 3' incision and the C-terminal half is responsible for the 5' incision. In Oenococcus oeni (strain ATCC BAA-331 / PSU-1), this protein is UvrABC system protein C.